The chain runs to 430 residues: Enolase (430 aa).

Glutamine 163 provides a ligand contact to (2R)-2-phosphoglycerate. Glutamate 205 functions as the Proton donor in the catalytic mechanism. Mg(2+) is bound by residues aspartate 242, glutamate 285, and aspartate 312. (2R)-2-phosphoglycerate contacts are provided by lysine 337, arginine 366, serine 367, and lysine 388. Residue lysine 337 is the Proton acceptor of the active site.

This sequence belongs to the enolase family. The cofactor is Mg(2+).

It localises to the cytoplasm. Its subcellular location is the secreted. The protein resides in the cell surface. It carries out the reaction (2R)-2-phosphoglycerate = phosphoenolpyruvate + H2O. Its pathway is carbohydrate degradation; glycolysis; pyruvate from D-glyceraldehyde 3-phosphate: step 4/5. Functionally, catalyzes the reversible conversion of 2-phosphoglycerate (2-PG) into phosphoenolpyruvate (PEP). It is essential for the degradation of carbohydrates via glycolysis. The chain is Enolase from Bifidobacterium animalis subsp. lactis (strain AD011).